Here is a 249-residue protein sequence, read N- to C-terminus: Adenylate kinase (249 aa).

An ATP-binding site is contributed by 43–48 (GAGKGT). Residues 63–92 (ATGDMLRAQVAAKSALGVEAKKIMDQGGLV) form an NMP region. AMP contacts are provided by residues Thr-64, Arg-69, 90 to 92 (GLV), 119 to 122 (GFPR), and Gln-126. The segment at 160-197 (GRLVHPASGRSYHKLFNPPKKDMIDDVSGDALVQRSDD) is LID. Residues Arg-161 and 170–171 (SY) each bind ATP. Residues Arg-194 and Arg-205 each coordinate AMP. Gln-233 contributes to the ATP binding site.

The protein belongs to the adenylate kinase family. AK2 subfamily. As to quaternary structure, monomer.

Its subcellular location is the cytoplasm. The protein resides in the cytosol. The protein localises to the mitochondrion intermembrane space. The catalysed reaction is AMP + ATP = 2 ADP. Catalyzes the reversible transfer of the terminal phosphate group between ATP and AMP. Plays an important role in cellular energy homeostasis and in adenine nucleotide metabolism. Adenylate kinase activity is critical for regulation of the phosphate utilization and the AMP de novo biosynthesis pathways. The sequence is that of Adenylate kinase from Debaryomyces hansenii (strain ATCC 36239 / CBS 767 / BCRC 21394 / JCM 1990 / NBRC 0083 / IGC 2968) (Yeast).